We begin with the raw amino-acid sequence, 664 residues long: DNA ligase (664 aa).

Residues 32 to 36 (DKEYD) and 80 to 81 (SL) contribute to the NAD(+) site. Lys-122 serves as the catalytic N6-AMP-lysine intermediate. Positions 144, 178, and 314 each coordinate NAD(+). Zn(2+) is bound by residues Cys-407, Cys-410, Cys-423, and Cys-429. One can recognise a BRCT domain in the interval 587-664 (IDENPFMDKT…NEEEFSNKIK (78 aa)).

Belongs to the NAD-dependent DNA ligase family. LigA subfamily. Mg(2+) is required as a cofactor. It depends on Mn(2+) as a cofactor.

It carries out the reaction NAD(+) + (deoxyribonucleotide)n-3'-hydroxyl + 5'-phospho-(deoxyribonucleotide)m = (deoxyribonucleotide)n+m + AMP + beta-nicotinamide D-nucleotide.. Its function is as follows. DNA ligase that catalyzes the formation of phosphodiester linkages between 5'-phosphoryl and 3'-hydroxyl groups in double-stranded DNA using NAD as a coenzyme and as the energy source for the reaction. It is essential for DNA replication and repair of damaged DNA. The polypeptide is DNA ligase (Clostridium botulinum (strain Langeland / NCTC 10281 / Type F)).